The primary structure comprises 758 residues: 5-methyltetrahydropteroyltriglutamate--homocysteine methyltransferase (758 aa).

5-methyltetrahydropteroyltri-L-glutamate is bound by residues 16-19 (RELK) and lysine 112. Residues 433-435 (IGS) and glutamate 486 contribute to the L-homocysteine site. L-methionine contacts are provided by residues 433–435 (IGS) and glutamate 486. Residues 517–518 (RC) and tryptophan 563 each bind 5-methyltetrahydropteroyltri-L-glutamate. Aspartate 601 is a binding site for L-homocysteine. Aspartate 601 is a binding site for L-methionine. Glutamate 607 is a 5-methyltetrahydropteroyltri-L-glutamate binding site. Histidine 643, cysteine 645, and glutamate 667 together coordinate Zn(2+). Catalysis depends on histidine 696, which acts as the Proton donor. Cysteine 728 contributes to the Zn(2+) binding site.

This sequence belongs to the vitamin-B12 independent methionine synthase family. It depends on Zn(2+) as a cofactor.

The catalysed reaction is 5-methyltetrahydropteroyltri-L-glutamate + L-homocysteine = tetrahydropteroyltri-L-glutamate + L-methionine. Its pathway is amino-acid biosynthesis; L-methionine biosynthesis via de novo pathway; L-methionine from L-homocysteine (MetE route): step 1/1. Functionally, catalyzes the transfer of a methyl group from 5-methyltetrahydrofolate to homocysteine resulting in methionine formation. This Neisseria meningitidis serogroup C / serotype 2a (strain ATCC 700532 / DSM 15464 / FAM18) protein is 5-methyltetrahydropteroyltriglutamate--homocysteine methyltransferase.